We begin with the raw amino-acid sequence, 318 residues long: Probable carboxylesterase 1 (318 aa).

Met-1 carries the post-translational modification N-acetylmethionine. An Involved in the stabilization of the negatively charged intermediate by the formation of the oxyanion hole motif is present at residues 79–81 (HGG). Catalysis depends on residues Ser-163, Asp-258, and His-290.

Belongs to the 'GDXG' lipolytic enzyme family. In terms of tissue distribution, expressed in roots, stems, flowers and siliques.

It carries out the reaction a carboxylic ester + H2O = an alcohol + a carboxylate + H(+). Its function is as follows. Carboxylesterase acting on esters with varying acyl chain length. This is Probable carboxylesterase 1 (CXE1) from Arabidopsis thaliana (Mouse-ear cress).